The sequence spans 88 residues: Small ribosomal subunit protein uS17 (88 aa).

This sequence belongs to the universal ribosomal protein uS17 family. Part of the 30S ribosomal subunit.

In terms of biological role, one of the primary rRNA binding proteins, it binds specifically to the 5'-end of 16S ribosomal RNA. The chain is Small ribosomal subunit protein uS17 from Leuconostoc mesenteroides subsp. mesenteroides (strain ATCC 8293 / DSM 20343 / BCRC 11652 / CCM 1803 / JCM 6124 / NCDO 523 / NBRC 100496 / NCIMB 8023 / NCTC 12954 / NRRL B-1118 / 37Y).